A 95-amino-acid polypeptide reads, in one-letter code: Co-chaperonin GroES (95 aa).

It belongs to the GroES chaperonin family. As to quaternary structure, heptamer of 7 subunits arranged in a ring. Interacts with the chaperonin GroEL.

It localises to the cytoplasm. Its function is as follows. Together with the chaperonin GroEL, plays an essential role in assisting protein folding. The GroEL-GroES system forms a nano-cage that allows encapsulation of the non-native substrate proteins and provides a physical environment optimized to promote and accelerate protein folding. GroES binds to the apical surface of the GroEL ring, thereby capping the opening of the GroEL channel. The polypeptide is Co-chaperonin GroES (Geobacter sulfurreducens (strain ATCC 51573 / DSM 12127 / PCA)).